A 479-amino-acid polypeptide reads, in one-letter code: Pyruvate kinase (479 aa).

Position 36 (arginine 36) interacts with substrate. K(+) is bound by residues asparagine 38, serine 40, and aspartate 70. ATP is bound at residue 38-41 (NFSH). Arginine 77 and lysine 160 together coordinate ATP. Mg(2+) is bound at residue glutamate 225. The substrate site is built by glycine 251, aspartate 252, and threonine 284. Position 252 (aspartate 252) interacts with Mg(2+).

Belongs to the pyruvate kinase family. As to quaternary structure, homotetramer. It depends on Mg(2+) as a cofactor. The cofactor is K(+).

It catalyses the reaction pyruvate + ATP = phosphoenolpyruvate + ADP + H(+). It functions in the pathway carbohydrate degradation; glycolysis; pyruvate from D-glyceraldehyde 3-phosphate: step 5/5. Its activity is regulated as follows. Allosterically activated by AMP and by several sugar phosphates. Belongs to type II PK. The chain is Pyruvate kinase (pykA) from Buchnera aphidicola subsp. Baizongia pistaciae (strain Bp).